We begin with the raw amino-acid sequence, 221 residues long: Large ribosomal subunit protein uL16x (221 aa).

This sequence belongs to the universal ribosomal protein uL16 family. Component of the small ribosomal subunit. Mature ribosomes consist of a small (40S) and a large (60S) subunit. The 40S subunit contains about 33 different proteins and 1 molecule of RNA (18S). The 60S subunit contains about 49 different proteins and 3 molecules of RNA (25S, 5.8S and 5S).

The chain is Large ribosomal subunit protein uL16x (RPL10C) from Arabidopsis thaliana (Mouse-ear cress).